Consider the following 31-residue polypeptide: Photosystem II reaction center protein T (31 aa).

A helical transmembrane segment spans residues 3–23; the sequence is AIVYTFLLVGTLGIIFFAIFF.

This sequence belongs to the PsbT family. In terms of assembly, PSII is composed of 1 copy each of membrane proteins PsbA, PsbB, PsbC, PsbD, PsbE, PsbF, PsbH, PsbI, PsbJ, PsbK, PsbL, PsbM, PsbT, PsbY, PsbZ, Psb30/Ycf12, at least 3 peripheral proteins of the oxygen-evolving complex and a large number of cofactors. It forms dimeric complexes.

The protein localises to the plastid. It is found in the chloroplast thylakoid membrane. In terms of biological role, found at the monomer-monomer interface of the photosystem II (PS II) dimer, plays a role in assembly and dimerization of PSII. PSII is a light-driven water plastoquinone oxidoreductase, using light energy to abstract electrons from H(2)O, generating a proton gradient subsequently used for ATP formation. The protein is Photosystem II reaction center protein T of Ostreococcus tauri.